A 354-amino-acid chain; its full sequence is Neutral protease 2 homolog SNOG_02177 (354 aa).

The N-terminal stretch at 1-19 (MKFQILSVAALASLASAVS) is a signal peptide. Positions 20–182 (DALDKRDSPL…WIDLAKRTIV (163 aa)) are excised as a propeptide. Intrachain disulfides connect Cys186–Cys257 and Cys264–Cys282. Asn214 carries N-linked (GlcNAc...) asparagine glycosylation. Residue His306 participates in Zn(2+) binding. The active site involves Glu307. His310 provides a ligand contact to Zn(2+).

It belongs to the peptidase M35 family. Zn(2+) serves as cofactor.

It localises to the secreted. The enzyme catalyses Preferential cleavage of bonds with hydrophobic residues in P1'. Also 3-Asn-|-Gln-4 and 8-Gly-|-Ser-9 bonds in insulin B chain.. Functionally, secreted metalloproteinase that allows assimilation of proteinaceous substrates. Shows high activities on basic nuclear substrates such as histone and protamine. The protein is Neutral protease 2 homolog SNOG_02177 of Phaeosphaeria nodorum (strain SN15 / ATCC MYA-4574 / FGSC 10173) (Glume blotch fungus).